The primary structure comprises 47 residues: Putative beta-neurotoxin (47 aa).

In terms of domain architecture, LCN-type CS-alpha/beta spans 1–47 (KEGYMGSDGCKMSCVINDQFCDTECQAKLKGSTGYCYFXGLACYXXG). Disulfide bonds link C14/C36 and C21/C43.

As to expression, expressed by the venom gland.

It is found in the secreted. Functionally, causes transient paralysis of the rear legs of and spasms in insects (A.domestica). The polypeptide is Putative beta-neurotoxin (Rhopalurus junceus (Caribbean blue scorpion)).